The chain runs to 955 residues: uncharacterized protein (955 aa).

The N-terminal stretch at 1–24 (MQSSLIKILGVLAIVATLVCFVFA) is a signal peptide. Residues 127–146 (STRPGKSNLDDNGKMIPIPR) are disordered. The next 6 helical transmembrane spans lie at 597-617 (IKAL…LGFA), 707-727 (LGLS…IVII), 739-759 (AFMA…FLLF), 781-801 (VVLM…LDFV), 818-838 (FIGT…INWF), and 857-877 (IVAL…SGNM). A disordered region spans residues 905 to 955 (LSQVGMDEKTRKGITGRAKERLKQRNETLKQAEKTRKNAPKEEPPKAEIPK). Positions 910-955 (MDEKTRKGITGRAKERLKQRNETLKQAEKTRKNAPKEEPPKAEIPK) are enriched in basic and acidic residues.

Belongs to the TrbL/VirB6 family.

The protein localises to the cell membrane. This is an uncharacterized protein from Rickettsia bellii (strain RML369-C).